The chain runs to 1481 residues: Cystic fibrosis transmembrane conductance regulator (1481 aa).

At 1–77 (MQRSPLEKAS…KLINALRRCF (77 aa)) the chain is on the cytoplasmic side. The chain crosses the membrane as a helical span at residues 78–98 (FWRFMFYGILLYLGEVTKAVQ). In terms of domain architecture, ABC transmembrane type-1 1 spans 81–365 (FMFYGILLYL…WAVQTWYDSL (285 aa)). The Extracellular segment spans residues 99-122 (PLLLGRIIASYDPDNKEERSIAIY). Residues 123 to 146 (LGIGLCLLFIVRTLLLHPAIFGLH) form a helical membrane-spanning segment. Residues 147–195 (HIGMQMRIAMFSLIYKKTLKLSSRVLDKISIGQLVSLLSNNLNKFDEGL) are Cytoplasmic-facing. The helical transmembrane segment at 196-216 (ALAHFVWIVPLQVALLMGLIW) threads the bilayer. Topologically, residues 217–222 (ELLQAS) are extracellular. A helical membrane pass occupies residues 223-243 (AFCGLGFLIVLALFQAGLGRM). Residues 244-298 (MMKYRDQRAGKINERLVITSEMIENIQSVKAYCWEEAMEKMIENLRQTELKLTRK) lie on the Cytoplasmic side of the membrane. Residues 299–319 (AAYVRYFNSSAFFFSGFFVVF) traverse the membrane as a helical segment. Residues 320–339 (LSVLPYALIKGIVLRKIFTT) lie on the Extracellular side of the membrane. Residues 340–358 (ISFCIVLRMAVTRQFPWAV) form a helical membrane-spanning segment. The Cytoplasmic portion of the chain corresponds to 359–858 (QTWYDSLGAI…YLRYITVHKS (500 aa)). ATP is bound by residues Trp-401, Ser-434, 458 to 465 (GSTGAGKT), and Gln-493. The ABC transporter 1 domain maps to 423-646 (NDDDSLFFSN…RPDFSSKLMG (224 aa)). The S-palmitoyl cysteine moiety is linked to residue Cys-524. A phosphoserine mark is found at Ser-549 and Ser-660. A disordered R region region spans residues 654 to 831 (SAERRNSILT…EEINEEDLKE (178 aa)). Position 670 is a phosphoserine; by PKA (Ser-670). At Ser-686 the chain carries Phosphoserine. A Glycyl lysine isopeptide (Lys-Gly) (interchain with G-Cter in ubiquitin) cross-link involves residue Lys-688. Phosphoserine is present on residues Ser-700 and Ser-712. The residue at position 717 (Thr-717) is a Phosphothreonine. 6 positions are modified to phosphoserine: Ser-737, Ser-753, Ser-768, Ser-790, Ser-795, and Ser-813. A helical membrane pass occupies residues 859–879 (LIFVLIWCLVIFLAEVAASLV). The ABC transmembrane type-1 2 domain occupies 859 to 1155 (LIFVLIWCLV…AVNSSIDVDS (297 aa)). The Extracellular segment spans residues 880 to 918 (VLWFLGNTPPQDKGNSTYSRNNSYAVIITRTSSYYVFYI). N-linked (GlcNAc...) asparagine glycans are attached at residues Asn-894 and Asn-900. A discontinuously helical membrane pass occupies residues 919–939 (YVGVADTLLAMGFFRGLPLVH). Topologically, residues 940–990 (TLITVSKILHHKMLHSVLQAPMSTLNTLKAGGILNRFSKDIAILDDLLPLT) are cytoplasmic. A helical transmembrane segment spans residues 991–1011 (IFDFIQLLLIVIGAIAVVAVL). The Extracellular portion of the chain corresponds to 1012–1013 (QP). A helical membrane pass occupies residues 1014–1034 (YIFVATVPVIVAFIMLRAYFL). Over 1035–1095 (QTSQQLKQLE…TANWFLYLST (61 aa)) the chain is Cytoplasmic. A helical membrane pass occupies residues 1096–1116 (LRWFQMRIEMIFVIFFIAVTF). Topologically, residues 1117–1130 (ISILTTGEGEGTVG) are extracellular. Residues 1131-1151 (IILTLAMNIMSTLQWAVNSSI) form a helical membrane-spanning segment. Over 1152–1481 (DVDSLMRSVS…TEEEVQDTRL (330 aa)) the chain is Cytoplasmic. In terms of domain architecture, ABC transporter 2 spans 1211–1444 (MTVKDLTAKY…RSLFQQAISP (234 aa)). ATP-binding positions include Tyr-1220 and 1245 to 1252 (GRTGSGKS). The interaction with GORASP2 stretch occupies residues 1387–1481 (RTLKQAFADC…TEEEVQDTRL (95 aa)). Cys-1396 carries S-palmitoyl cysteine lipidation. Phosphoserine is present on residues Ser-1445 and Ser-1457. A PDZ-binding motif is present at residues 1479-1481 (TRL).

The protein belongs to the ABC transporter superfamily. ABCC family. CFTR transporter (TC 3.A.1.202) subfamily. As to quaternary structure, monomer; does not require oligomerization for channel activity. May form oligomers in the membrane. Interacts with SLC26A3, SLC26A6 and NHERF1. Interacts with SHANK2. Interacts with MYO6. Interacts (via C-terminus) with GOPC (via PDZ domain); this promotes CFTR internalization and thereby decreases channel activity. Interacts with SLC4A7 through NHERF1. Found in a complex with MYO5B and RAB11A. Interacts with ANO1. Interacts with SLC26A8. Interacts with AHCYL1; the interaction increases CFTR activity. Interacts with CSE1L. The core-glycosylated form interacts with GORASP2 (via PDZ GRASP-type 1 domain) in respone to ER stress. Interacts with MARCHF2; the interaction leads to CFTR ubiqtuitination and degradation. Interacts with ADGRG2. In terms of processing, N-glycosylated. Post-translationally, phosphorylated; cAMP treatment promotes phosphorylation and activates the channel. Dephosphorylation decreases the ATPase activity (in vitro). Phosphorylation at PKA sites activates the channel. Phosphorylation at PKC sites enhances the response to phosphorylation by PKA. Phosphorylated by AMPK; this inhibits channel activity. Ubiquitinated, leading to its degradation in the lysosome. Deubiquitination by USP10 in early endosomes enhances its endocytic recycling to the cell membrane. Ubiquitinated by RNF185 during ER stress. Ubiquitinated by MARCHF2.

It localises to the apical cell membrane. Its subcellular location is the early endosome membrane. The protein resides in the cell membrane. It is found in the recycling endosome membrane. The protein localises to the endoplasmic reticulum membrane. It localises to the nucleus. It carries out the reaction ATP + H2O + closed Cl(-) channel = ADP + phosphate + open Cl(-) channel.. The catalysed reaction is chloride(in) = chloride(out). The enzyme catalyses hydrogencarbonate(in) = hydrogencarbonate(out). It catalyses the reaction ATP + H2O = ADP + phosphate + H(+). In terms of biological role, epithelial ion channel that plays an important role in the regulation of epithelial ion and water transport and fluid homeostasis. Mediates the transport of chloride ions across the cell membrane. Possesses an intrinsic ATPase activity and utilizes ATP to gate its channel; the passive flow of anions through the channel is gated by cycles of ATP binding and hydrolysis by the ATP-binding domains. The ion channel is also permeable to HCO(3)(-); selectivity depends on the extracellular chloride concentration. Exerts its function also by modulating the activity of other ion channels and transporters. Contributes to the regulation of the pH and the ion content of the epithelial fluid layer. Modulates the activity of the epithelial sodium channel (ENaC) complex, in part by regulating the cell surface expression of the ENaC complex. May regulate bicarbonate secretion and salvage in epithelial cells by regulating the transporter SLC4A7. Can inhibit the chloride channel activity of ANO1. Plays a role in the chloride and bicarbonate homeostasis during sperm epididymal maturation and capacitation. The protein is Cystic fibrosis transmembrane conductance regulator of Macaca nemestrina (Pig-tailed macaque).